The chain runs to 230 residues: MSTEPVSQHDPLALAGLMQLVSPALPIGAFAWSQGLESALELGWVDDEASLGEWLAGVLDDGLTRCELPVLARVHRAWAEGDAQALAHWNDWLQANRETRELLEEEQRLGGTLVRLLRSLDQVPVTPAMPETPGYVVVFALAARVRGVSREDAMLGFAWAWLENQLTVACKALPLGQTSAQRLVERLRPALVAAVSEALALDDDDLGPALPGLALASALHETQYSRLFRS.

The protein belongs to the UreF family. UreD, UreF and UreG form a complex that acts as a GTP-hydrolysis-dependent molecular chaperone, activating the urease apoprotein by helping to assemble the nickel containing metallocenter of UreC. The UreE protein probably delivers the nickel.

It localises to the cytoplasm. In terms of biological role, required for maturation of urease via the functional incorporation of the urease nickel metallocenter. The polypeptide is Urease accessory protein UreF (Chromohalobacter salexigens (strain ATCC BAA-138 / DSM 3043 / CIP 106854 / NCIMB 13768 / 1H11)).